Here is a 305-residue protein sequence, read N- to C-terminus: tRNA pseudouridine synthase B (305 aa).

Residue aspartate 39 is the Nucleophile of the active site. The region spanning 237–305 (LPVIIVPGEF…FLLKPHKVLK (69 aa)) is the PUA domain.

Belongs to the pseudouridine synthase TruB family. Type 1 subfamily.

It carries out the reaction uridine(55) in tRNA = pseudouridine(55) in tRNA. Functionally, responsible for synthesis of pseudouridine from uracil-55 in the psi GC loop of transfer RNAs. The chain is tRNA pseudouridine synthase B from Moorella thermoacetica (strain ATCC 39073 / JCM 9320).